The following is a 220-amino-acid chain: Inner kinetochore subunit fta3 (220 aa).

It belongs to the CENP-H/MCM16 family. As to quaternary structure, component of the inner kinetochore constitutive centromere-associated network (CCAN) (also known as central kinetochore Sim4 complex in fission yeast), which is composed of at least cnl2, cnp3, cnp20, fta1, fta2, fta3, fta4, fta6, fta7, mal2, mhf1, mhf2, mis6, mis15, mis17, sim4 and wip1.

Its subcellular location is the nucleus. The protein resides in the chromosome. It localises to the centromere. The protein localises to the kinetochore. Its function is as follows. Component of the kinetochore, a multiprotein complex that assembles on centromeric DNA and attaches chromosomes to spindle microtubules, mediating chromosome segregation and sister chromatid segregation during meiosis and mitosis. Component of the inner kinetochore constitutive centromere-associated network (CCAN), which serves as a structural platform for outer kinetochore assembly. Fta2, fta3 and fta4 associate with the central core (cnt) and inner repeat (inr) region of the centromere. In Schizosaccharomyces pombe (strain 972 / ATCC 24843) (Fission yeast), this protein is Inner kinetochore subunit fta3 (fta3).